A 197-amino-acid chain; its full sequence is Rac-like GTP-binding protein ARAC11 (197 aa).

13 to 20 (GDGAVGKT) is a binding site for GTP. Positions 35–43 (YVPTVFDNF) match the Effector region motif. Residues 60–64 (DTAGQ) and 118–121 (TKLD) contribute to the GTP site. At C194 the chain carries Cysteine methyl ester. C194 is lipidated: S-geranylgeranyl cysteine. Positions 195–197 (SIL) are cleaved as a propeptide — removed in mature form.

Belongs to the small GTPase superfamily. Rho family. As to quaternary structure, part of a complex containing ROPGEF1 and PRK2. Interacts with UGT1, ICR1, ICR2, ICR3, ICR4 and ICR5. Interacts with PHIP1 when activated by GTP. As to expression, exclusively expressed in mature pollen and pollen tubes.

The protein localises to the cytoplasm. It is found in the membrane. It carries out the reaction GTP + H2O = GDP + phosphate + H(+). Functionally, may be involved in cell polarity control during the actin-dependent tip growth of pollen tubes. May regulate callose synthase 1 (CALS1) activity through the interaction with UGT1. In terms of biological role, inactive GDP-bound Rho GTPases reside in the cytosol, are found in a complex with Rho GDP-dissociation inhibitors (Rho GDIs), and are released from the GDI protein in order to translocate to membranes upon activation. This Arabidopsis thaliana (Mouse-ear cress) protein is Rac-like GTP-binding protein ARAC11.